Reading from the N-terminus, the 169-residue chain is GSK-3-binding protein (169 aa).

Residues 75–100 are disordered; it reads TPRGAARHAQHHHHHSPRQQGTGGNK. Over residues 79–91 the composition is skewed to basic residues; that stretch reads AARHAQHHHHHSP. Residues 122–145 are involved in GSK-3 binding; that stretch reads DDPHELLQELLLSGNLIKEAVRRL. The segment at 147-169 is disordered; that stretch reads MAGESPDPPGSRRVSECTETTVQ.

It belongs to the GSK-3-binding protein family.

Its function is as follows. Binds GSK-3 and prevents GSK-3-dependent phosphorylation. Regulates the stability of beta-catenin in embryos. Maternal GBP is required for dorsal-ventral axis formation. The chain is GSK-3-binding protein (gbp) from Xenopus laevis (African clawed frog).